The primary structure comprises 193 residues: MVVNKTTAVLYLIALSLSGFIHTFLRAEERGIYDDVFTADALRHYRINERGGRTGSLTCSGALLSSPCTLVSNEVPLSLRPENHSAAAGAPLMLRLAGCGDGGALQPGKRGVAMTVSGSLVTGPGSGSALLPDRKLSGCDHLVIHDGDTFLLCRPDRRQEEMLAAWRKRATQEGEYSDARSNPAMLRLSIKYE.

An N-terminal signal peptide occupies residues 1–27 (MVVNKTTAVLYLIALSLSGFIHTFLRA).

The protein resides in the periplasm. This protein maintains pilus integrity and thus is an important participant in pilus assembly. It may function as molecular chaperone directly or indirectly in the correct assembly of PapA subunits. This is Protein PapJ (papJ) from Escherichia coli.